A 245-amino-acid polypeptide reads, in one-letter code: Orotidine 5'-phosphate decarboxylase (245 aa).

Substrate is bound by residues Asp22, Lys44, 71–80 (DLKFHDIPNT), Thr131, Arg192, Gln201, Gly221, and Arg222. Lys73 functions as the Proton donor in the catalytic mechanism.

Belongs to the OMP decarboxylase family. Type 1 subfamily. In terms of assembly, homodimer.

The catalysed reaction is orotidine 5'-phosphate + H(+) = UMP + CO2. It functions in the pathway pyrimidine metabolism; UMP biosynthesis via de novo pathway; UMP from orotate: step 2/2. Functionally, catalyzes the decarboxylation of orotidine 5'-monophosphate (OMP) to uridine 5'-monophosphate (UMP). The chain is Orotidine 5'-phosphate decarboxylase from Salmonella newport (strain SL254).